The sequence spans 495 residues: ATP-NADH kinase YEF1 (495 aa).

The interval 442–480 (KYRLDSSKNGNDTISNPLESSCISSDAQDEERKSVTETE) is disordered. A compositionally biased stretch (polar residues) spans 448-467 (SKNGNDTISNPLESSCISSD).

This sequence belongs to the NAD kinase family. Homooctamer. Requires Mg(2+) as cofactor. Mn(2+) is required as a cofactor. It depends on Co(2+) as a cofactor. Ca(2+) serves as cofactor.

The enzyme catalyses NADH + ATP = ADP + NADPH + H(+). In terms of biological role, ATP-NADH kinase with a low phosphorylation activity of both NADH and NAD(+) to produce NADP and NADPH by using ATP. UTR1 is responsible for essentially all of the NAD/NADH kinase activity resident in the cytoplasm, whereas POS5 is responsible for all mitochondrial NAD/NADH kinase activity and consequent mitochondrial genome maintenance. YEF1 can substitute for UTR1 when overexpressed. This Saccharomyces cerevisiae (strain ATCC 204508 / S288c) (Baker's yeast) protein is ATP-NADH kinase YEF1 (YEF1).